Reading from the N-terminus, the 503-residue chain is MLFSQIVATSRDVGATRSRKVKVGALREVLIQLEPAEVEPVVAWLSGELRQGRIGIGWRTLGDIPATPADVPAVTVSDLDGTVTAVAGISGSGSAARRRKLLADLFARTTADERDFLLRLLTGDLRQGALEGVMTDAIAAAADLPVEPVRRAFMLSGRLPATAVAAFDGGVDALTAFRLEVGRPVRPMLASPAESLTDAWTELGGDVSVEYKLDGARIQVHRNGDDVHVFTRTLREITGSVPELVELVAGLPCTSAVFDGETLALTDSGRPRPFQETMSRFGAESARDLLLHPYFFDCLHLDGVDLLDAPLEERLAALERVAPQHRIPGLIRPDSDGAATHFDDALAAGHEGVMVKSLAAPYAAGRRGRAWQKVKPEHTLDLVVLGAEWGYGRRTGYLSNLHLGARDPDGGEPIMVGKTFKGLTDALLQWQTDEFPRHERDRDDHTVYLHPDLVVEIELDGVQVSTRYPGGLALRFARVLRYRPDKTAAEADTIDAVRALLPG.

Position 210 (Glu-210) interacts with ATP. Residue Lys-212 is the N6-AMP-lysine intermediate of the active site. Residues Arg-217, Arg-232, Glu-261, Phe-296, Arg-367, and Lys-373 each coordinate ATP.

Belongs to the ATP-dependent DNA ligase family. It depends on Mg(2+) as a cofactor.

The catalysed reaction is ATP + (deoxyribonucleotide)n-3'-hydroxyl + 5'-phospho-(deoxyribonucleotide)m = (deoxyribonucleotide)n+m + AMP + diphosphate.. Its function is as follows. DNA ligase that seals nicks in double-stranded DNA during DNA replication, DNA recombination and DNA repair. The sequence is that of Probable DNA ligase from Rhodococcus jostii (strain RHA1).